The primary structure comprises 166 residues: EEF1A lysine methyltransferase 1 (166 aa).

Belongs to the class I-like SAM-binding methyltransferase superfamily. EFM5 family.

It is found in the cytoplasm. It carries out the reaction L-lysyl-[protein] + 3 S-adenosyl-L-methionine = N(6),N(6),N(6)-trimethyl-L-lysyl-[protein] + 3 S-adenosyl-L-homocysteine + 3 H(+). Protein-lysine methyltransferase that selectively catalyzes the trimethylation of EEF1A at 'Lys-79'. This chain is EEF1A lysine methyltransferase 1, found in Danio rerio (Zebrafish).